A 157-amino-acid polypeptide reads, in one-letter code: Transcription factor HES-2 (157 aa).

Residues 13-70 (LRKSLKPLLEKRRRARINESLSQLKGLVLPLLGAETSRYSKLEKADILEMTVRFLREQ) enclose the bHLH domain. Residues 86–119 (YLEGYRACLARLARVLPACSVLEPAVSARLLEHL) form the Orange domain. The disordered stretch occupies residues 124 to 157 (VSGGPPSLTPASASAPAPSPPVPPPSSLGLWRPW). A compositionally biased stretch (low complexity) spans 125-139 (SGGPPSLTPASASAP). The span at 140–149 (APSPPVPPPS) shows a compositional bias: pro residues. The WRPW motif signature appears at 154-157 (WRPW).

In terms of assembly, transcription repression requires formation of a complex with a corepressor protein of the Groucho/TLE family.

The protein resides in the nucleus. In terms of biological role, transcriptional repressor of genes that require a bHLH protein for their transcription. The protein is Transcription factor HES-2 (Hes2) of Rattus norvegicus (Rat).